Here is a 185-residue protein sequence, read N- to C-terminus: Ribosome-recycling factor (185 aa).

It belongs to the RRF family.

The protein resides in the cytoplasm. Responsible for the release of ribosomes from messenger RNA at the termination of protein biosynthesis. May increase the efficiency of translation by recycling ribosomes from one round of translation to another. The protein is Ribosome-recycling factor of Clostridium botulinum (strain Alaska E43 / Type E3).